Reading from the N-terminus, the 341-residue chain is uncharacterized protein (341 aa).

The next 10 membrane-spanning stretches (helical) occupy residues 10–30 (ALGV…SFLT), 42–62 (PFLI…PWYF), 107–127 (LGFC…LGFT), 129–149 (VASF…LGTI), 155–175 (FTLS…IVVT), 192–212 (ALGN…SVMV), 226–246 (LFFG…LIIL), 263–283 (LIVL…WVIA), 290–310 (LLVT…DILL), and 313–333 (HYLN…FIVV).

The protein belongs to the TPT transporter family.

It localises to the vacuole membrane. The protein localises to the golgi apparatus membrane. This is an uncharacterized protein from Schizosaccharomyces pombe (strain 972 / ATCC 24843) (Fission yeast).